The following is a 431-amino-acid chain: Trigger factor (431 aa).

Positions 158–243 (GYLVALETWS…VIEVSEPVLL (86 aa)) constitute a PPIase FKBP-type domain.

The protein belongs to the FKBP-type PPIase family. Tig subfamily.

The protein localises to the cytoplasm. It catalyses the reaction [protein]-peptidylproline (omega=180) = [protein]-peptidylproline (omega=0). Its function is as follows. Involved in protein export. Acts as a chaperone by maintaining the newly synthesized protein in an open conformation. Functions as a peptidyl-prolyl cis-trans isomerase. The sequence is that of Trigger factor from Xylella fastidiosa (strain M23).